Reading from the N-terminus, the 309-residue chain is 1,2-phenylacetyl-CoA epoxidase, subunit A (309 aa).

Residues R33, Q37, 103 to 106 (KYSS), N132, M193, 202 to 204 (SPN), K214, and N218 each bind substrate.

As to quaternary structure, forms a stable heterotetramer (dimer of heterodimers) with PaaC. It depends on Fe cation as a cofactor.

The enzyme catalyses phenylacetyl-CoA + NADPH + O2 + H(+) = 2-(1,2-epoxy-1,2-dihydrophenyl)acetyl-CoA + NADP(+) + H2O. The protein operates within aromatic compound metabolism; phenylacetate degradation. Its function is as follows. Component of 1,2-phenylacetyl-CoA epoxidase multicomponent enzyme system which catalyzes the reduction of phenylacetyl-CoA (PA-CoA) to form 1,2-epoxyphenylacetyl-CoA. The subunit A is the catalytic subunit involved in the incorporation of one atom of molecular oxygen into phenylacetyl-CoA. The chain is 1,2-phenylacetyl-CoA epoxidase, subunit A (paaA) from Escherichia coli (strain K12).